The sequence spans 314 residues: Putative thiamine biosynthesis protein HI_0357 (314 aa).

The protein belongs to the NMT1/THI5 family.

In terms of biological role, probably involved in thiamine biosynthesis. The protein is Putative thiamine biosynthesis protein HI_0357 of Haemophilus influenzae (strain ATCC 51907 / DSM 11121 / KW20 / Rd).